A 572-amino-acid chain; its full sequence is Probable D-xylulose kinase A (572 aa).

Positions 95, 166, 282, and 283 each coordinate substrate. Residues W365, 470–471 (GG), and N474 contribute to the ATP site.

This sequence belongs to the FGGY kinase family.

It localises to the cytoplasm. It carries out the reaction D-xylulose + ATP = D-xylulose 5-phosphate + ADP + H(+). Highly specific D-xylulose kinase which participates in the catabolism of xylose. Xylose is a major component of hemicelluloses such as xylan. Most fungi utilize D-xylose via three enzymatic reactions, xylose reductase (XR), xylitol dehydrogenase (XDH), and xylulokinase, to form xylulose 5-phosphate, which enters pentose phosphate pathway. The polypeptide is Probable D-xylulose kinase A (xkiA) (Aspergillus flavus (strain ATCC 200026 / FGSC A1120 / IAM 13836 / NRRL 3357 / JCM 12722 / SRRC 167)).